Consider the following 602-residue polypeptide: MSATSEYPVQRWFGMEVLDHSQGAIDWSRMRSGAPLLAQHDRWSTKGQIGVVEEAWLDDDRRMRVRVRFSKSKEAEEIWRDVVDGIRRNVSCGYLPQEMVLEKREGDLEHFRVTRWQPFEISIVSVAADPTVGIGRSTDQTTSTITIRGSEMDEQENTTTTAQQPGKSVNGEHQEPTTRTFAEPKDGALEKERQRSADILALGERFSQRDLAMQAVTQGYSVDSFRRQLLDAQAPQPIDTNPGDNQRDLPQFNHQRPGQNVEKLGITERDMSQYSLLRAINAMATGDYKDAGFEREVSNAIADASGTEARGLFMPHEALFGGMLRQQEKKTPSKGGILVDTDMRTDMYTEILKNRTVLGALGATVLSGLQGDVDIPKQLSEGNFYWLDEDGEAPQSDIDFGTIGLSPKTISGAIAITRRLRKQASMSIENLVRNELLSGVAVTTDKGYLYGTGEDNQPLGLMYQTGIPGLTYADKFGWDEAVDMETQVGQANVSANGMGYLTSVGQRGAGKKTFVAAGTGERLWHNNEVNGYRAMASNQVNADTWVFGDWAQVLIALWGVVDLKVDQATKAASDGLILRVFQDVDVNARRKEAFSIARKSVA.

Disordered stretches follow at residues 149–191 (GSEM…ALEK) and 234–261 (APQPIDTNPGDNQRDLPQFNHQRPGQNV). The segment covering 157-167 (NTTTTAQQPGK) has biased composition (polar residues). The segment covering 170–191 (NGEHQEPTTRTFAEPKDGALEK) has biased composition (basic and acidic residues).

It belongs to the HK97 phage major capsid protein family.

The protein localises to the virion. Functionally, assembles to form an icosahedral capsid. The protein is Major capsid protein of Vreelandella aquamarina (Bacteriophage phiHAP-1).